The following is a 270-amino-acid chain: Acetyl-coenzyme A carboxylase carboxyl transferase subunit beta (270 aa).

One can recognise a CoA carboxyltransferase N-terminal domain in the interval 16 to 270; it reads LFAKCPACKH…KLLAFHGGSK (255 aa). Residues Cys-20, Cys-23, Cys-38, and Cys-41 each coordinate Zn(2+). Residues 20 to 41 form a C4-type zinc finger; sequence CPACKHMIYQKDLGLEKICPKC.

This sequence belongs to the AccD/PCCB family. As to quaternary structure, acetyl-CoA carboxylase is a heterohexamer composed of biotin carboxyl carrier protein (AccB), biotin carboxylase (AccC) and two subunits each of ACCase subunit alpha (AccA) and ACCase subunit beta (AccD). Zn(2+) serves as cofactor.

Its subcellular location is the cytoplasm. The enzyme catalyses N(6)-carboxybiotinyl-L-lysyl-[protein] + acetyl-CoA = N(6)-biotinyl-L-lysyl-[protein] + malonyl-CoA. Its pathway is lipid metabolism; malonyl-CoA biosynthesis; malonyl-CoA from acetyl-CoA: step 1/1. Functionally, component of the acetyl coenzyme A carboxylase (ACC) complex. Biotin carboxylase (BC) catalyzes the carboxylation of biotin on its carrier protein (BCCP) and then the CO(2) group is transferred by the transcarboxylase to acetyl-CoA to form malonyl-CoA. The chain is Acetyl-coenzyme A carboxylase carboxyl transferase subunit beta from Streptococcus mutans serotype c (strain NN2025).